A 286-amino-acid polypeptide reads, in one-letter code: Acetylglutamate kinase (286 aa).

Substrate is bound by residues 69 to 70 (GG), Arg91, and Asn185.

Belongs to the acetylglutamate kinase family. ArgB subfamily.

The protein resides in the cytoplasm. It carries out the reaction N-acetyl-L-glutamate + ATP = N-acetyl-L-glutamyl 5-phosphate + ADP. Its pathway is amino-acid biosynthesis; L-arginine biosynthesis; N(2)-acetyl-L-ornithine from L-glutamate: step 2/4. Catalyzes the ATP-dependent phosphorylation of N-acetyl-L-glutamate. In Chlorobium chlorochromatii (strain CaD3), this protein is Acetylglutamate kinase.